The primary structure comprises 156 residues: Small ribosomal subunit protein uS7 (156 aa).

Belongs to the universal ribosomal protein uS7 family. In terms of assembly, part of the 30S ribosomal subunit. Contacts proteins S9 and S11.

In terms of biological role, one of the primary rRNA binding proteins, it binds directly to 16S rRNA where it nucleates assembly of the head domain of the 30S subunit. Is located at the subunit interface close to the decoding center, probably blocks exit of the E-site tRNA. This is Small ribosomal subunit protein uS7 from Mesomycoplasma hyopneumoniae (strain 232) (Mycoplasma hyopneumoniae).